The sequence spans 304 residues: Non-specific ribonucleoside hydrolase RihC (304 aa).

The active site involves histidine 235.

It belongs to the IUNH family. RihC subfamily.

Functionally, hydrolyzes both purine and pyrimidine ribonucleosides with a broad-substrate specificity. The protein is Non-specific ribonucleoside hydrolase RihC of Salmonella paratyphi A (strain ATCC 9150 / SARB42).